A 248-amino-acid polypeptide reads, in one-letter code: tRNA (guanine-N(1)-)-methyltransferase (248 aa).

S-adenosyl-L-methionine contacts are provided by residues glycine 113 and 133–138 (IGDYVL).

This sequence belongs to the RNA methyltransferase TrmD family. In terms of assembly, homodimer.

The protein localises to the cytoplasm. The enzyme catalyses guanosine(37) in tRNA + S-adenosyl-L-methionine = N(1)-methylguanosine(37) in tRNA + S-adenosyl-L-homocysteine + H(+). Its function is as follows. Specifically methylates guanosine-37 in various tRNAs. In Shewanella woodyi (strain ATCC 51908 / MS32), this protein is tRNA (guanine-N(1)-)-methyltransferase.